Consider the following 122-residue polypeptide: Large ribosomal subunit protein uL14 (122 aa).

The protein belongs to the universal ribosomal protein uL14 family. As to quaternary structure, part of the 50S ribosomal subunit. Forms a cluster with proteins L3 and L19. In the 70S ribosome, L14 and L19 interact and together make contacts with the 16S rRNA in bridges B5 and B8.

Functionally, binds to 23S rRNA. Forms part of two intersubunit bridges in the 70S ribosome. The polypeptide is Large ribosomal subunit protein uL14 (Mesomycoplasma hyopneumoniae (strain 232) (Mycoplasma hyopneumoniae)).